The chain runs to 72 residues: Large ribosomal subunit protein uL29 (72 aa).

It belongs to the universal ribosomal protein uL29 family.

The polypeptide is Large ribosomal subunit protein uL29 (Caldicellulosiruptor saccharolyticus (strain ATCC 43494 / DSM 8903 / Tp8T 6331)).